Reading from the N-terminus, the 399-residue chain is Phosphate acyltransferase (399 aa).

Belongs to the PlsX family. In terms of assembly, homodimer. Probably interacts with PlsY.

The protein resides in the cytoplasm. The enzyme catalyses a fatty acyl-[ACP] + phosphate = an acyl phosphate + holo-[ACP]. It participates in lipid metabolism; phospholipid metabolism. Catalyzes the reversible formation of acyl-phosphate (acyl-PO(4)) from acyl-[acyl-carrier-protein] (acyl-ACP). This enzyme utilizes acyl-ACP as fatty acyl donor, but not acyl-CoA. In Rhodobacter capsulatus (Rhodopseudomonas capsulata), this protein is Phosphate acyltransferase.